Reading from the N-terminus, the 255-residue chain is Phycoerythrobilin:ferredoxin oxidoreductase (255 aa).

Belongs to the HY2 family.

It carries out the reaction (3Z)-phycoerythrobilin + oxidized 2[4Fe-4S]-[ferredoxin] = 15,16-dihydrobiliverdin + reduced 2[4Fe-4S]-[ferredoxin] + 2 H(+). Its function is as follows. Catalyzes the two-electron reduction of the C2 and C3(1) diene system of 15,16-dihydrobiliverdin. This chain is Phycoerythrobilin:ferredoxin oxidoreductase (pebB), found in Nostoc punctiforme (strain ATCC 29133 / PCC 73102).